A 504-amino-acid polypeptide reads, in one-letter code: Maturase K (504 aa).

It belongs to the intron maturase 2 family. MatK subfamily.

The protein localises to the plastid. It localises to the chloroplast. Functionally, usually encoded in the trnK tRNA gene intron. Probably assists in splicing its own and other chloroplast group II introns. This chain is Maturase K, found in Nepenthes gracilis (Slender pitcher plant).